Here is a 312-residue protein sequence, read N- to C-terminus: DNA-directed RNA polymerase subunit alpha (312 aa).

An alpha N-terminal domain (alpha-NTD) region spans residues 1-229 (MLQYQIDRIE…ELFQPLATVT (229 aa)). The interval 246–312 (IPLEELNLSV…ISIPQSRTSA (67 aa)) is alpha C-terminal domain (alpha-CTD).

The protein belongs to the RNA polymerase alpha chain family. In terms of assembly, in cyanobacteria the RNAP catalytic core is composed of 2 alpha, 1 beta, 1 beta', 1 gamma and 1 omega subunit. When a sigma factor is associated with the core the holoenzyme is formed, which can initiate transcription.

It carries out the reaction RNA(n) + a ribonucleoside 5'-triphosphate = RNA(n+1) + diphosphate. In terms of biological role, DNA-dependent RNA polymerase catalyzes the transcription of DNA into RNA using the four ribonucleoside triphosphates as substrates. The protein is DNA-directed RNA polymerase subunit alpha of Prochlorococcus marinus (strain SARG / CCMP1375 / SS120).